We begin with the raw amino-acid sequence, 830 residues long: DNA replication licensing factor MCM6 (830 aa).

The segment at 159 to 186 adopts a C4-type zinc-finger fold; the sequence is CLDCGNVVKNVEQQFKYTEPIICVNATC. In terms of domain architecture, MCM spans 349 to 555; it reads FFNKIVDSIC…NTDYHIAHHI (207 aa). ATP is bound at residue 399–406; that stretch reads GDPSCAKS. Residues 531–534 carry the Arginine finger motif; the sequence is SRFD. The segment at 671–710 is disordered; that stretch reads DFQDADDGTNVPADNDAGQPTEMDAAPQQDGPENEQAADT.

Belongs to the MCM family. As to quaternary structure, component of the minichromosome maintenance (MCM) complex, a heterotetramer composed of MCM2, MCM3, MCM4, MCM5, MCM6 and MCM7.

It localises to the nucleus. The enzyme catalyses ATP + H2O = ADP + phosphate + H(+). Functionally, probable component of the MCM2-7 complex (MCM complex) that may function as a DNA helicase and which is essential to undergo a single round of replication initiation and elongation per cell cycle in eukaryotic cells. The polypeptide is DNA replication licensing factor MCM6 (MCM6) (Oryza sativa subsp. indica (Rice)).